We begin with the raw amino-acid sequence, 652 residues long: Probable serine/threonine-protein kinase mkcD (652 aa).

3 disordered regions span residues 1–47 (MNNI…RKNK), 163–198 (NPIDENDKINSKSINDGDDNGGGSGGGGDNSPLTNV), and 257–289 (QQKLKQEQQQEQQQQQEDEPNKSPVSTSSTLSP). The span at 182–191 (NGGGSGGGGD) shows a compositional bias: gly residues. Positions 231–275 (KNNQNLHHKQQQLQQLQQLKQQHLQQQQKLKQEQQQEQQQQQEDE) form a coiled coil. The segment covering 257–271 (QQKLKQEQQQEQQQQ) has biased composition (low complexity). Polar residues predominate over residues 279 to 289 (SPVSTSSTLSP). In terms of domain architecture, Protein kinase spans 369 to 626 (FKNLDFEARG…SSQLLQHPFL (258 aa)). ATP contacts are provided by residues 375 to 383 (EARGGFGSV) and Lys-403. Asp-494 serves as the catalytic Proton acceptor.

Belongs to the protein kinase superfamily. STE Ser/Thr protein kinase family. STE20 subfamily. Mg(2+) serves as cofactor.

It carries out the reaction L-seryl-[protein] + ATP = O-phospho-L-seryl-[protein] + ADP + H(+). The enzyme catalyses L-threonyl-[protein] + ATP = O-phospho-L-threonyl-[protein] + ADP + H(+). The polypeptide is Probable serine/threonine-protein kinase mkcD (Dictyostelium discoideum (Social amoeba)).